The primary structure comprises 309 residues: Large ribosomal subunit protein mL45 (309 aa).

Belongs to the mitochondrion-specific ribosomal protein mL45 family. Component of the mitochondrial ribosome large subunit (39S) which comprises a 16S rRNA and about 50 distinct proteins.

The protein localises to the mitochondrion. Functionally, component of the mitochondrial large ribosomal subunit (mt-LSU). Within the mitochondrial ribosomes, required to direct the nascent polypeptide toward the tunnel exit and position the exit at a distance from the membrane surface. This Xenopus laevis (African clawed frog) protein is Large ribosomal subunit protein mL45 (mrpl45).